A 479-amino-acid chain; its full sequence is Fibrinogen beta chain (479 aa).

The signal sequence occupies residues 1-18; it reads MRHLWLLLLSVSLVQTQA. Residues 20–82 are disordered; that stretch reads TTDSDKVDLS…VERKPPDAGG (63 aa). A beta-chain polymerization, binding distal domain of another fibrin region spans residues 33 to 35; the sequence is GHR. Composition is skewed to basic and acidic residues over residues 35 to 45 and 64 to 78; these read RPVDRRKEEPP and AKVD…RKPP. Cystine bridges form between C219–C304 and C229–C258. Residues 220–476 form the Fibrinogen C-terminal domain; sequence NIPVVSGKEC…RMSMKIRPVF (257 aa). N-linked (GlcNAc...) asparagine glycosylation is present at N382. A disulfide bond links C412 and C425.

In terms of assembly, heterohexamer; disulfide linked. Contains 2 sets of 3 non-identical chains (alpha, beta and gamma). The 2 heterotrimers are in head to head conformation with the N-termini in a small central domain. Post-translationally, conversion of fibrinogen to fibrin is triggered by thrombin, which cleaves fibrinopeptides A and B from alpha and beta chains, and thus exposes the N-terminal polymerization sites responsible for the formation of the soft clot.

It is found in the secreted. Its function is as follows. Cleaved by the protease thrombin to yield monomers which, together with fibrinogen alpha (FGA) and fibrinogen gamma (FGG), polymerize to form an insoluble fibrin matrix. Fibrin has a major function in hemostasis as one of the primary components of blood clots. In addition, functions during the early stages of wound repair to stabilize the lesion and guide cell migration during re-epithelialization. Was originally thought to be essential for platelet aggregation, based on in vitro studies using anticoagulated blood. However subsequent studies have shown that it is not absolutely required for thrombus formation in vivo. Enhances expression of SELP in activated platelets. Maternal fibrinogen is essential for successful pregnancy. Fibrin deposition is also associated with infection, where it protects against IFNG-mediated hemorrhage. May also facilitate the antibacterial immune response via both innate and T-cell mediated pathways. The chain is Fibrinogen beta chain (Fgb) from Rattus norvegicus (Rat).